A 346-amino-acid polypeptide reads, in one-letter code: Magnesium-protoporphyrin IX monomethyl ester [oxidative] cyclase (346 aa).

The protein belongs to the AcsF family. It depends on Fe cation as a cofactor.

The catalysed reaction is Mg-protoporphyrin IX 13-monomethyl ester + 3 NADPH + 3 O2 + 2 H(+) = 3,8-divinyl protochlorophyllide a + 3 NADP(+) + 5 H2O. It participates in porphyrin-containing compound metabolism; chlorophyll biosynthesis (light-independent). Catalyzes the formation of the isocyclic ring in chlorophyll biosynthesis. Mediates the cyclase reaction, which results in the formation of divinylprotochlorophyllide (Pchlide) characteristic of all chlorophylls from magnesium-protoporphyrin IX 13-monomethyl ester (MgPMME). The protein is Magnesium-protoporphyrin IX monomethyl ester [oxidative] cyclase of Gloeobacter violaceus (strain ATCC 29082 / PCC 7421).